The chain runs to 569 residues: Glucose-6-phosphate isomerase, cytosolic 1A (569 aa).

Glu-360 (proton donor) is an active-site residue. Residues His-391 and Lys-516 contribute to the active site.

Belongs to the GPI family. Homodimer.

The protein localises to the cytoplasm. The enzyme catalyses alpha-D-glucose 6-phosphate = beta-D-fructose 6-phosphate. It functions in the pathway carbohydrate degradation; glycolysis; D-glyceraldehyde 3-phosphate and glycerone phosphate from D-glucose: step 2/4. The protein is Glucose-6-phosphate isomerase, cytosolic 1A (PGIC1-A) of Clarkia lewisii (Farewell-to-spring).